A 259-amino-acid polypeptide reads, in one-letter code: Phosphate import ATP-binding protein PstB (259 aa).

The 245-residue stretch at 10 to 254 (AESRNLSFYY…PSRKETEDYI (245 aa)) folds into the ABC transporter domain. 43 to 50 (GPSGCGKS) serves as a coordination point for ATP.

The protein belongs to the ABC transporter superfamily. Phosphate importer (TC 3.A.1.7) family. As to quaternary structure, the complex is composed of two ATP-binding proteins (PstB), two transmembrane proteins (PstC and PstA) and a solute-binding protein (PstS).

Its subcellular location is the cell inner membrane. The enzyme catalyses phosphate(out) + ATP + H2O = ADP + 2 phosphate(in) + H(+). In terms of biological role, part of the ABC transporter complex PstSACB involved in phosphate import. Responsible for energy coupling to the transport system. This is Phosphate import ATP-binding protein PstB from Methylobacillus flagellatus (strain ATCC 51484 / DSM 6875 / VKM B-1610 / KT).